The following is a 496-amino-acid chain: E3 ubiquitin-protein ligase XIAP (496 aa).

3 BIR repeats span residues 26–93 (EFNR…CRFI), 163–230 (EEAR…CFFV), and 264–329 (YDAR…CKYL). Residues cysteine 299, cysteine 302, and histidine 319 each coordinate Zn(2+). Residue lysine 321 forms a Glycyl lysine isopeptide (Lys-Gly) (interchain with G-Cter in ubiquitin) linkage. Cysteine 326 provides a ligand contact to Zn(2+). Lysine 327 is covalently cross-linked (Glycyl lysine isopeptide (Lys-Gly) (interchain with G-Cter in ubiquitin)). Cysteine 449 is subject to S-nitrosocysteine. The segment at 449-484 (CKICMDRNIAIVFVPCGHLVTCKQCAEAVDKCPMCC) adopts an RING-type zinc-finger fold.

Belongs to the IAP family. As to quaternary structure, monomer, and homodimer. Interacts (via BIR3 domain) with DIABLO/SMAC; the interaction inhibits apoptotic suppressor activity. Interacts with HTRA2/PRSS25; the interaction inhibits apoptotic suppressor activity. Interacts with TAB1/MAP3K7IP1 and AIFM1. Interaction with DIABLO/SMAC hinders binding of TAB1/MAP3K7IP1 and AIFM1. Interacts with TCF25 and COMMD1. Interacts (via BIR3 domain) with SEPTIN4. Interacts with RIP1, RIP2, RIP3, RIP4, CCS and USP19. Interacts (via BIR 2 domain and BIR 3 domain) with HAX1 (via C-terminus) and this interaction blocks ubiquitination of XIAP/BIRC4. Interacts with the monomeric form of BIRC5/survivin. Interacts with TLE3 and TCF7L2/TCF4. Interacts (via BIR 3 and RING domains) with PDCL3. Post-translationally, S-Nitrosylation down-regulates its E3 ubiquitin-protein ligase activity. Autoubiquitinated. Ubiquitinated by TRIM32; leading to proteasomal degradation.

It is found in the cytoplasm. The protein localises to the nucleus. It catalyses the reaction S-ubiquitinyl-[E2 ubiquitin-conjugating enzyme]-L-cysteine + [acceptor protein]-L-lysine = [E2 ubiquitin-conjugating enzyme]-L-cysteine + N(6)-ubiquitinyl-[acceptor protein]-L-lysine.. Multi-functional protein which regulates not only caspases and apoptosis, but also modulates inflammatory signaling and immunity, copper homeostasis, mitogenic kinase signaling, cell proliferation, as well as cell invasion and metastasis. Acts as a direct caspase inhibitor. Directly bind to the active site pocket of CASP3 and CASP7 and obstructs substrate entry. Inactivates CASP9 by keeping it in a monomeric, inactive state. Acts as an E3 ubiquitin-protein ligase regulating NF-kappa-B signaling and the target proteins for its E3 ubiquitin-protein ligase activity include: RIPK1, RIPK2, MAP3K2/MEKK2, DIABLO/SMAC, AIFM1, CCS, PTEN and BIRC5/survivin. Acts as an important regulator of innate immunity by mediating 'Lys-63'-linked polyubiquitination of RIPK2 downstream of NOD1 and NOD2, thereby transforming RIPK2 into a scaffolding protein for downstream effectors, ultimately leading to activation of the NF-kappa-B and MAP kinases signaling. 'Lys-63'-linked polyubiquitination of RIPK2 also promotes recruitment of the LUBAC complex to RIPK2. Regulates the BMP signaling pathway and the SMAD and MAP3K7/TAK1 dependent pathways leading to NF-kappa-B and JNK activation. Ubiquitination of CCS leads to enhancement of its chaperone activity toward its physiologic target, SOD1, rather than proteasomal degradation. Ubiquitination of MAP3K2/MEKK2 and AIFM1 does not lead to proteasomal degradation. Plays a role in copper homeostasis by ubiquitinating COMMD1 and promoting its proteasomal degradation. Can also function as E3 ubiquitin-protein ligase of the NEDD8 conjugation pathway, targeting effector caspases for neddylation and inactivation. Ubiquitinates and therefore mediates the proteasomal degradation of BCL2 in response to apoptosis. Protects cells from spontaneous formation of the ripoptosome, a large multi-protein complex that has the capability to kill cancer cells in a caspase-dependent and caspase-independent manner. Suppresses ripoptosome formation by ubiquitinating RIPK1 and CASP8. Acts as a positive regulator of Wnt signaling and ubiquitinates TLE1, TLE2, TLE3, TLE4 and AES. Ubiquitination of TLE3 results in inhibition of its interaction with TCF7L2/TCF4 thereby allowing efficient recruitment and binding of the transcriptional coactivator beta-catenin to TCF7L2/TCF4 that is required to initiate a Wnt-specific transcriptional program. This Rattus norvegicus (Rat) protein is E3 ubiquitin-protein ligase XIAP (Xiap).